A 472-amino-acid polypeptide reads, in one-letter code: ATP synthase subunit beta (472 aa).

160 to 167 (GGAGVGKT) is an ATP binding site.

The protein belongs to the ATPase alpha/beta chains family. F-type ATPases have 2 components, CF(1) - the catalytic core - and CF(0) - the membrane proton channel. CF(1) has five subunits: alpha(3), beta(3), gamma(1), delta(1), epsilon(1). CF(0) has three main subunits: a(1), b(2) and c(9-12). The alpha and beta chains form an alternating ring which encloses part of the gamma chain. CF(1) is attached to CF(0) by a central stalk formed by the gamma and epsilon chains, while a peripheral stalk is formed by the delta and b chains.

Its subcellular location is the cell membrane. It catalyses the reaction ATP + H2O + 4 H(+)(in) = ADP + phosphate + 5 H(+)(out). Its function is as follows. Produces ATP from ADP in the presence of a proton gradient across the membrane. The catalytic sites are hosted primarily by the beta subunits. This chain is ATP synthase subunit beta, found in Lachnoclostridium phytofermentans (strain ATCC 700394 / DSM 18823 / ISDg) (Clostridium phytofermentans).